Reading from the N-terminus, the 494-residue chain is Homeotic protein bicoid (494 aa).

3 disordered regions span residues 1 to 49 (MAQP…PPQF), 149 to 210 (RRRH…TAHM), and 263 to 293 (QQVH…AQQQ). Residues 14–40 (PLPHTHTHPHPHSHPHPHSHPHPHHQH) show a composition bias toward basic residues. Residues 97 to 156 (PRRTRTTFTSSQIAELEQHFLQGRYLTAPRLADLSAKLALGTAQVKIWFKNRRRRHKIQS) constitute a DNA-binding region (homeobox). A compositionally biased stretch (basic and acidic residues) spans 154-163 (IQSDQHKDQS). The segment at 433–440 (RGAAFAKF) is RNA-binding.

Belongs to the paired homeobox family. Bicoid subfamily. In terms of assembly, interacts with Bin1; in vitro and yeast cells. Interacts with bin3. Maternal expression is an anterior cap concentrated in the cortical cytoplasm. Its transcript is produced maternally and sequestered near the anterior pole of the mature oocyte. After egg deposition, it is translated into protein, which diffuses toward the posterior, forming a long-range anterior gradient.

It localises to the nucleus. In terms of biological role, segment polarity transcription factor that provides positional cues for the development of head and thoracic segments. Forms a protein concentration gradient that patterns the anterior-posterior axis during embryogenesis and promotes the expression of anterior gap genes, such as hunchback (hb), ocelliless (oc), and buttonhead (btd). Binds to regulatory DNA sequences containing a 5'-TAATCC-3' sequence motif. Also binds RNA. Interacts with Bin1 to repress transcription of bicoid target genes in the anterior tip of the embryo; a process known as retraction. The chain is Homeotic protein bicoid from Drosophila melanogaster (Fruit fly).